A 432-amino-acid chain; its full sequence is uncharacterized protein (432 aa).

The Cytochrome c domain maps to 223–432 (ASAVRGEALF…KDLIEYLKTR (210 aa)). Heme c is bound by residues C236, C239, and H240.

This is an uncharacterized protein from Sinorhizobium fredii (strain NBRC 101917 / NGR234).